The sequence spans 587 residues: Calcium/calmodulin-dependent protein kinase kinase 2 (587 aa).

A compositionally biased stretch (polar residues) spans 1-11 (MSSCVSSQPTS). Disordered regions lie at residues 1-32 (MSSC…SQKP) and 74-115 (EADG…SSLD). S2 bears the N-acetylserine mark. Phosphoserine occurs at positions 99, 113, 128, 132, and 136. Polar residues predominate over residues 101 to 115 (QERSQGGPASSSSLD). The Protein kinase domain maps to 164–445 (YTLKDEIGKG…VPEIKLHPWV (282 aa)). ATP-binding positions include 170 to 178 (IGKGSYGVV) and K193. The RP domain stretch occupies residues 203–225 (QAGFPRRPPPRGTRPAPGGCIQP). The disordered stretch occupies residues 204–224 (AGFPRRPPPRGTRPAPGGCIQ). D311 serves as the catalytic Proton acceptor. Residues 471-476 (ENSVKH) form an autoinhibitory domain region. Residues 474–499 (VKHIPSLATVILVKTMIRKRSFGNPF) form a calmodulin-binding region. Phosphoserine is present on residues S494 and S510. The interval 496–587 (GNPFEGSRRE…QQPEEAMEPE (92 aa)) is disordered. The segment covering 520–535 (PTREWEPLSEPKEARQ) has biased composition (basic and acidic residues). Pro residues predominate over residues 569-579 (PGSPPRTPPQQ). S571 carries the phosphoserine modification.

This sequence belongs to the protein kinase superfamily. Ser/Thr protein kinase family. Interacts with calmodulin. Post-translationally, phosphorylated by PKA. Each isoform may show a different pattern of phosphorylation. Autophosphorylated. In terms of tissue distribution, mainly expressed in brain, but detected in all tissues tested (at protein level). In the brain, isoform 1 may be predominant. with high levels in the cerebellum and hippocampus, although isoform 3 is detectable. Isoform 3 is also expressed in lung.

Its subcellular location is the nucleus. The protein localises to the cytoplasm. It is found in the cell projection. The protein resides in the neuron projection. The catalysed reaction is L-seryl-[protein] + ATP = O-phospho-L-seryl-[protein] + ADP + H(+). It catalyses the reaction L-threonyl-[protein] + ATP = O-phospho-L-threonyl-[protein] + ADP + H(+). Its activity is regulated as follows. Activated by Ca(2+)/calmodulin. Binding of calmodulin may relieve intrasteric autoinhibition. Autophosphorylation does not alter activity or regulation by Ca(2+)/calmodulin. In part, activity is independent on Ca(2+)/calmodulin. Functionally, calcium/calmodulin-dependent protein kinase belonging to a proposed calcium-triggered signaling cascade involved in a number of cellular processes. Phosphorylates CAMK1 and CAMK4. Phosphorylates CAMK1D. Seems to be involved in hippocampal activation of CREB1. Efficiently phosphorylates 5'-AMP-activated protein kinase (AMPK) trimer, including that consisting of PRKAA1, PRKAB1 and PRKAG1. This phosphorylation is stimulated in response to Ca(2+) signals. May play a role in neurite growth. Isoform 2 may promote neurite elongation, while isoform 1 may promoter neurite branching. The polypeptide is Calcium/calmodulin-dependent protein kinase kinase 2 (Camkk2) (Rattus norvegicus (Rat)).